We begin with the raw amino-acid sequence, 485 residues long: Aspartyl/glutamyl-tRNA(Asn/Gln) amidotransferase subunit B (485 aa).

Belongs to the GatB/GatE family. GatB subfamily. Heterotrimer of A, B and C subunits.

It carries out the reaction L-glutamyl-tRNA(Gln) + L-glutamine + ATP + H2O = L-glutaminyl-tRNA(Gln) + L-glutamate + ADP + phosphate + H(+). The catalysed reaction is L-aspartyl-tRNA(Asn) + L-glutamine + ATP + H2O = L-asparaginyl-tRNA(Asn) + L-glutamate + ADP + phosphate + 2 H(+). Functionally, allows the formation of correctly charged Asn-tRNA(Asn) or Gln-tRNA(Gln) through the transamidation of misacylated Asp-tRNA(Asn) or Glu-tRNA(Gln) in organisms which lack either or both of asparaginyl-tRNA or glutaminyl-tRNA synthetases. The reaction takes place in the presence of glutamine and ATP through an activated phospho-Asp-tRNA(Asn) or phospho-Glu-tRNA(Gln). In Methylacidiphilum infernorum (isolate V4) (Methylokorus infernorum (strain V4)), this protein is Aspartyl/glutamyl-tRNA(Asn/Gln) amidotransferase subunit B.